Reading from the N-terminus, the 268-residue chain is (+)-cis,trans-nepetalactol synthase NEPS2 (268 aa).

Residues 16-22 (GGASGIG), 41-43 (DIQ), 65-66 (DI), Asn-92, 163-167 (YVMSK), and 196-200 (VLTPL) contribute to the NAD(+) site.

This sequence belongs to the short-chain dehydrogenases/reductases (SDR) family.

The catalysed reaction is (S)-8-oxocitronellyl enol = cis-trans-nepetalactol. Functionally, functions as a non-oxidoreductive cyclase to promote the formation of cis-trans-nepetalactol. Cis-trans-nepetalactol is then oxidized by NEPS1 into cis-trans-nepetalactone, which belongs to a family of metabolites that are both insect-repellent and have euphoric effect in cats. Binds NAD(+) as classical short-chain dehydrogenase/reductase (SDR), but does not utilize it for its redox-neutral cyclase activity. The polypeptide is (+)-cis,trans-nepetalactol synthase NEPS2 (Nepeta racemosa (Catmint)).